We begin with the raw amino-acid sequence, 207 residues long: Ras-related protein RABH1d (207 aa).

16–23 contacts GTP; the sequence is GDQSVGKT. Residues 38–46 carry the Effector region motif; that stretch reads YQATIGIDF. GTP contacts are provided by residues 64–68, 122–125, and 152–153; these read DTAGQ, NKTD, and SA. Residues cysteine 205 and cysteine 207 are each lipidated (S-geranylgeranyl cysteine). Position 207 is a cysteine methyl ester (cysteine 207).

The protein belongs to the small GTPase superfamily. Rab family.

The protein localises to the golgi apparatus membrane. Its function is as follows. Protein transport. Regulator of membrane traffic from the Golgi apparatus towards the endoplasmic reticulum (ER). The protein is Ras-related protein RABH1d (RABH1D) of Arabidopsis thaliana (Mouse-ear cress).